The primary structure comprises 131 residues: UPF0292 protein PF1724 (131 aa).

The 84-residue stretch at 20 to 103 (KGVIIVEGKR…ETRRELQFIA (84 aa)) folds into the Toprim domain. Mg(2+)-binding residues include glutamate 26, aspartate 69, and aspartate 71.

The protein belongs to the UPF0292 family. The cofactor is Mg(2+).

The polypeptide is UPF0292 protein PF1724 (Pyrococcus furiosus (strain ATCC 43587 / DSM 3638 / JCM 8422 / Vc1)).